The chain runs to 250 residues: MPTVSMRDMLQAGVHFGHQTRYWNPKMGQYIFGARNKIHIINLEHTVPAFNDALAVIKQMASQKKKVLFVGTKRAAQKTVKEQAERAGMPYVSNRWLGGMLTNYKTIRGSIRSYRDLETQSQDGTFEKLTKKEALMRTRTMDKLELSIGGIKDMGGLPDAMFVIDVEHERIAIQEANKLGIPVIGVVDTNSDPAGVDYVIPGNDDAIRAIKLYVTAMADACLEGAREGSPAAAADEFVEVESEEKVANNG.

It belongs to the universal ribosomal protein uS2 family.

The protein is Small ribosomal subunit protein uS2 of Teredinibacter turnerae (strain ATCC 39867 / T7901).